A 355-amino-acid chain; its full sequence is MKITALASAILAVAQGALALPARAPALDITLSQVNNTRIKAVVKNSGTEKITFVHLNFFNDPSPVKKVSLYRNATEVEFTGIKQRLRSDGLSNDALTTLAPGATYEDEFDIASTANLTQGGPVTVRTQGFVPIAMNNKIAGYIPYSSNELELEVDAEKAVAVPASIKPLDRRTKITSSCTGNRATVLNTALRNAASIASKAADAASSGSSALFTEYFKSTSGNIRSAVAARLKAVASEASMNGGGSTTYYCSDPYGYCDSNVLAYTLPSTNEVVNCELFYTLQEVTNDCHGQDQATTIIHEFTHAPGVYPPGTEDLGYGYSAATALSTSNALNNADSYALFANGTSSFCVMTAFS.

The N-terminal stretch at 1–19 (MKITALASAILAVAQGALA) is a signal peptide. Positions 20-172 (LPARAPALDI…PASIKPLDRR (153 aa)) are excised as a propeptide. 2 disulfide bridges follow: C179/C251 and C258/C276. H300 contacts Zn(2+). Residue E301 is part of the active site. Zn(2+)-binding residues include H304 and D315.

It belongs to the peptidase M35 family. It depends on Zn(2+) as a cofactor.

Its subcellular location is the secreted. The catalysed reaction is Preferential cleavage of bonds with hydrophobic residues in P1'. Also 3-Asn-|-Gln-4 and 8-Gly-|-Ser-9 bonds in insulin B chain.. Functionally, secreted metalloproteinase that allows assimilation of proteinaceous substrates. Shows high activities on basic nuclear substrates such as histone and protamine. May be involved in virulence. The sequence is that of Neutral protease 2 homolog AFUB_100460 from Aspergillus fumigatus (strain CBS 144.89 / FGSC A1163 / CEA10) (Neosartorya fumigata).